We begin with the raw amino-acid sequence, 316 residues long: Ribosomal RNA small subunit methyltransferase H (316 aa).

Residues 35–37 (AGH), aspartate 55, phenylalanine 84, aspartate 105, and glutamine 112 each bind S-adenosyl-L-methionine.

This sequence belongs to the methyltransferase superfamily. RsmH family.

It is found in the cytoplasm. It carries out the reaction cytidine(1402) in 16S rRNA + S-adenosyl-L-methionine = N(4)-methylcytidine(1402) in 16S rRNA + S-adenosyl-L-homocysteine + H(+). Functionally, specifically methylates the N4 position of cytidine in position 1402 (C1402) of 16S rRNA. The polypeptide is Ribosomal RNA small subunit methyltransferase H (Streptococcus pneumoniae (strain P1031)).